We begin with the raw amino-acid sequence, 118 residues long: Class I hydrophobin 1 (118 aa).

A signal peptide spans Met1–Ala20. Disulfide bonds link Cys34/Cys97, Cys41/Cys91, Cys42/Cys77, and Cys98/Cys111. A glycan (N-linked (GlcNAc...) asparagine) is linked at Asn54. Residue Asn115 is glycosylated (N-linked (GlcNAc...) asparagine).

This sequence belongs to the fungal hydrophobin family. In terms of assembly, self-assembles to form functional amyloid fibrils called rodlets. Self-assembly into fibrillar rodlets occurs spontaneously at hydrophobic:hydrophilic interfaces and the rodlets further associate laterally to form amphipathic monolayers.

It is found in the secreted. It localises to the cell wall. Aerial growth, conidiation, and dispersal of filamentous fungi in the environment rely upon a capability of their secreting small amphipathic proteins called hydrophobins (HPBs) with low sequence identity. Class I can self-assemble into an outermost layer of rodlet bundles on aerial cell surfaces, conferring cellular hydrophobicity that supports fungal growth, development and dispersal; whereas Class II form highly ordered films at water-air interfaces through intermolecular interactions but contribute nothing to the rodlet structure. The chain is Class I hydrophobin 1 from Coprinopsis cinerea (strain Okayama-7 / 130 / ATCC MYA-4618 / FGSC 9003) (Inky cap fungus).